The primary structure comprises 448 residues: Probable glycine dehydrogenase (decarboxylating) subunit 1 (448 aa).

It belongs to the GcvP family. N-terminal subunit subfamily. The glycine cleavage system is composed of four proteins: P, T, L and H. In this organism, the P 'protein' is a heterodimer of two subunits.

The catalysed reaction is N(6)-[(R)-lipoyl]-L-lysyl-[glycine-cleavage complex H protein] + glycine + H(+) = N(6)-[(R)-S(8)-aminomethyldihydrolipoyl]-L-lysyl-[glycine-cleavage complex H protein] + CO2. In terms of biological role, the glycine cleavage system catalyzes the degradation of glycine. The P protein binds the alpha-amino group of glycine through its pyridoxal phosphate cofactor; CO(2) is released and the remaining methylamine moiety is then transferred to the lipoamide cofactor of the H protein. The sequence is that of Probable glycine dehydrogenase (decarboxylating) subunit 1 from Shouchella clausii (strain KSM-K16) (Alkalihalobacillus clausii).